The chain runs to 532 residues: P granule abnormality protein 2 (532 aa).

Interacts with pgl-1 and pgl-3; association with either pgl-1 or pgl-3 is not required for P-granule localization. Highly expressed in the germline.

The protein localises to the cytoplasmic granule. Transient component of P-granule which is involved in germline development. The protein is P granule abnormality protein 2 of Caenorhabditis elegans.